We begin with the raw amino-acid sequence, 383 residues long: 1-deoxy-D-xylulose 5-phosphate reductoisomerase (383 aa).

NADPH contacts are provided by Thr-10, Gly-11, Ser-12, Ile-13, Gly-36, Arg-37, Asn-38, and Asn-122. Lys-123 is a 1-deoxy-D-xylulose 5-phosphate binding site. Glu-124 serves as a coordination point for NADPH. Asp-148 is a binding site for Mn(2+). 1-deoxy-D-xylulose 5-phosphate is bound by residues Ser-149, Glu-150, Ser-174, and His-197. Glu-150 is a binding site for Mn(2+). NADPH is bound at residue Gly-203. 1-deoxy-D-xylulose 5-phosphate-binding residues include Ser-210, Asn-215, Lys-216, and Glu-219. Residue Glu-219 participates in Mn(2+) binding.

It belongs to the DXR family. It depends on Mg(2+) as a cofactor. Mn(2+) is required as a cofactor.

The catalysed reaction is 2-C-methyl-D-erythritol 4-phosphate + NADP(+) = 1-deoxy-D-xylulose 5-phosphate + NADPH + H(+). The protein operates within isoprenoid biosynthesis; isopentenyl diphosphate biosynthesis via DXP pathway; isopentenyl diphosphate from 1-deoxy-D-xylulose 5-phosphate: step 1/6. In terms of biological role, catalyzes the NADPH-dependent rearrangement and reduction of 1-deoxy-D-xylulose-5-phosphate (DXP) to 2-C-methyl-D-erythritol 4-phosphate (MEP). The protein is 1-deoxy-D-xylulose 5-phosphate reductoisomerase of Bacillus pumilus (strain SAFR-032).